The chain runs to 180 residues: Oligoribonuclease (180 aa).

The Exonuclease domain maps to Leu7–Leu170. Residue Tyr128 is part of the active site.

Belongs to the oligoribonuclease family.

Its subcellular location is the cytoplasm. Its function is as follows. 3'-to-5' exoribonuclease specific for small oligoribonucleotides. The chain is Oligoribonuclease from Marinobacter nauticus (strain ATCC 700491 / DSM 11845 / VT8) (Marinobacter aquaeolei).